The sequence spans 262 residues: Type II pantothenate kinase (262 aa).

ATP is bound at residue 7–14 (DAGGSLVK). The Proton acceptor role is filled by Glu71. Residues Thr101, 119–123 (GGLLT), and Tyr135 each bind ATP.

It belongs to the type II pantothenate kinase family. As to quaternary structure, homodimer.

It localises to the cytoplasm. The enzyme catalyses (R)-pantothenate + ATP = (R)-4'-phosphopantothenate + ADP + H(+). The protein operates within cofactor biosynthesis; coenzyme A biosynthesis; CoA from (R)-pantothenate: step 1/5. Catalyzes the phosphorylation of pantothenate (Pan), the first step in CoA biosynthesis. The polypeptide is Type II pantothenate kinase (Oceanobacillus iheyensis (strain DSM 14371 / CIP 107618 / JCM 11309 / KCTC 3954 / HTE831)).